The following is a 250-amino-acid chain: 2,3-bisphosphoglycerate-dependent phosphoglycerate mutase (250 aa).

Residues 8-15, 21-22, Arg60, 87-90, Lys98, 114-115, and 183-184 each bind substrate; these read RHGESQWN, TG, ERHY, RR, and GN. His9 serves as the catalytic Tele-phosphohistidine intermediate. Glu87 acts as the Proton donor/acceptor in catalysis.

This sequence belongs to the phosphoglycerate mutase family. BPG-dependent PGAM subfamily. Homodimer.

It catalyses the reaction (2R)-2-phosphoglycerate = (2R)-3-phosphoglycerate. It participates in carbohydrate degradation; glycolysis; pyruvate from D-glyceraldehyde 3-phosphate: step 3/5. Its function is as follows. Catalyzes the interconversion of 2-phosphoglycerate and 3-phosphoglycerate. The protein is 2,3-bisphosphoglycerate-dependent phosphoglycerate mutase of Bordetella avium (strain 197N).